The following is a 145-amino-acid chain: MLFIKSLLLLLSLIFAVSNATGYVGFKVDGPGCNATKIITLENGACQTVCTNLYGKVTPTNDPSKFNLNPFIDVDCKTPLMAEQQVTCLPDNKPFKVSTLTVTCIPDTTSSSTSPSSTSPSSTSPASTLIGSIAFVTLAALFALI.

The N-terminal stretch at 1-22 (MLFIKSLLLLLSLIFAVSNATG) is a signal peptide. N-linked (GlcNAc...) asparagine glycosylation is present at asparagine 34. Residues 107 to 126 (DTTSSSTSPSSTSPSSTSPA) are disordered. Over residues 108-126 (TTSSSTSPSSTSPSSTSPA) the composition is skewed to low complexity. Residue serine 117 is the site of GPI-like-anchor amidated serine attachment. The propeptide at 118–145 (TSPSSTSPASTLIGSIAFVTLAALFALI) is removed in mature form.

This sequence belongs to the ponticulin family. Post-translationally, the GPI-like-anchor contains a phosphoceramide group, rather than a phosphatidyl group.

The protein localises to the cell membrane. Its function is as follows. Binds F-actin and nucleates actin assembly. The sequence is that of Ponticulin-like protein B (ponB) from Dictyostelium discoideum (Social amoeba).